The chain runs to 241 residues: Small ribosomal subunit protein uS2 (241 aa).

Belongs to the universal ribosomal protein uS2 family.

The polypeptide is Small ribosomal subunit protein uS2 (Escherichia coli O127:H6 (strain E2348/69 / EPEC)).